The sequence spans 1367 residues: Insulin-like growth factor 1 receptor (1367 aa).

The signal sequence occupies residues M1–G30. C33 and C52 are joined by a disulfide. Residues N51, N102, and N135 are each glycosylated (N-linked (GlcNAc...) asparagine). 13 disulfides stabilise this stretch: C150–C178, C182–C205, C192–C211, C215–C224, C219–C230, C231–C239, C235–C248, C251–C260, C264–C276, C282–C303, C307–C321, C324–C328, and C332–C353. An N-linked (GlcNAc...) asparagine glycan is attached at N244. Residue N314 is glycosylated (N-linked (GlcNAc...) asparagine). N-linked (GlcNAc...) asparagine glycans are attached at residues N417 and N438. A disulfide bridge connects residues C455 and C488. Fibronectin type-III domains are found at residues D491–S609, V610–E708, P735–A828, and I834–K927. N-linked (GlcNAc...) asparagine glycosylation is found at N534, N607, N622, N640, N747, N756, N764, N900, and N913. Topologically, residues D741–H935 are extracellular. The chain crosses the membrane as a helical span at residues L936–H959. Topologically, residues R960–C1367 are cytoplasmic. The short motif at N977–Y980 is the IRS1- and SHC1-binding element. A Phosphotyrosine modification is found at Y980. The region spanning I999–F1274 is the Protein kinase domain. ATP is bound by residues L1005 to V1013 and K1033. D1135 functions as the Proton acceptor in the catalytic mechanism. A phosphotyrosine; by autocatalysis mark is found at Y1161, Y1165, and Y1166. Residues K1168 and K1171 each participate in a glycyl lysine isopeptide (Lys-Gly) (interchain with G-Cter in ubiquitin) cross-link. At S1278 the chain carries Phosphoserine; by GSK3-beta. Position 1282 is a phosphoserine (S1282). The segment at P1288–C1367 is disordered. The segment covering P1290–N1299 has biased composition (acidic residues). The span at M1300–L1316 shows a compositional bias: low complexity. Residues P1317–E1326 show a composition bias toward basic and acidic residues.

It belongs to the protein kinase superfamily. Tyr protein kinase family. Insulin receptor subfamily. As to quaternary structure, tetramer of 2 alpha and 2 beta chains linked by disulfide bonds. The alpha chains contribute to the formation of the ligand-binding domain, while the beta chain carries the kinase domain. Interacts with PIK3R1 and with the PTB/PID domains of IRS1 and SHC1 in vitro when autophosphorylated on tyrosine residues. Forms a hybrid receptor with INSR, the hybrid is a tetramer consisting of 1 alpha chain and 1 beta chain of INSR and 1 alpha chain and 1 beta chain of IGF1R. Interacts with ARRB1 and ARRB2. Interacts with GRB10. Interacts with RACK1. Interacts with SOCS1, SOCS2 and SOCS3. Interacts with 14-3-3 proteins. Interacts with NMD2. Interacts with MAP3K5. Interacts with STAT3. Found in a ternary complex with IGF1 and ITGAV:ITGB3 or ITGA6:ITGB4. Interacts (nascent precursor form) with ZFAND2B. (Microbial infection) Interacts with human respiratory syncytial virus (HRSV) fusion glycoprotein F1/F2 heterodimer. In terms of processing, autophosphorylated on tyrosine residues in response to ligand binding. Autophosphorylation occurs in trans, i.e. one subunit of the dimeric receptor phosphorylates tyrosine residues on the other subunit. Autophosphorylation occurs in a sequential manner; Tyr-1165 is predominantly phosphorylated first, followed by phosphorylation of Tyr-1161 and Tyr-1166. While every single phosphorylation increases kinase activity, all three tyrosine residues in the kinase activation loop (Tyr-1165, Tyr-1161 and Tyr-1166) have to be phosphorylated for optimal activity. Can be autophosphorylated at additional tyrosine residues (in vitro). Autophosphorylated is followed by phosphorylation of juxtamembrane tyrosines and C-terminal serines. May also be phosphorylated at Tyr-1161 and Tyr-1166 by mTORC2. Phosphorylation of Tyr-980 is required for IRS1- and SHC1-binding. Phosphorylation of Ser-1278 by GSK-3beta restrains kinase activity and promotes cell surface expression, it requires a priming phosphorylation at Ser-1282. Dephosphorylated by PTPN1. Post-translationally, polyubiquitinated at Lys-1168 and Lys-1171 through both 'Lys-48' and 'Lys-29' linkages, promoting receptor endocytosis and subsequent degradation by the proteasome. Ubiquitination is facilitated by pre-existing phosphorylation. Sumoylated with SUMO1. In terms of processing, controlled by regulated intramembrane proteolysis (RIP). Undergoes metalloprotease-dependent constitutive ectodomain shedding to produce a membrane-anchored 52 kDa C-Terminal fragment which is further processed by presenilin gamma-secretase to yield an intracellular 50 kDa fragment. In terms of tissue distribution, found as a hybrid receptor with INSR in muscle, heart, kidney, adipose tissue, skeletal muscle, hepatoma, fibroblasts, spleen and placenta (at protein level). Expressed in a variety of tissues. Overexpressed in tumors, including melanomas, cancers of the colon, pancreas prostate and kidney.

It is found in the cell membrane. The catalysed reaction is L-tyrosyl-[protein] + ATP = O-phospho-L-tyrosyl-[protein] + ADP + H(+). With respect to regulation, activated by autophosphorylation at Tyr-1165, Tyr-1161 and Tyr-1166 on the kinase activation loop; phosphorylation at all three tyrosine residues is required for optimal kinase activity. Inhibited by MSC1609119A-1, BMS-754807, PQIP, benzimidazole pyridinone, isoquinolinedione, bis-azaindole, 3-cyanoquinoline, 2,4-bis-arylamino-1,3-pyrimidine, pyrrolopyrimidine, pyrrole-5-carboxaldehyde, picropodophyllin (PPP), tyrphostin derivatives. While most inhibitors bind to the ATP binding pocket, MSC1609119A-1 functions as allosteric inhibitor and binds close to the DFG motif and the activation loop. Functionally, receptor tyrosine kinase which mediates actions of insulin-like growth factor 1 (IGF1). Binds IGF1 with high affinity and IGF2 and insulin (INS) with a lower affinity. The activated IGF1R is involved in cell growth and survival control. IGF1R is crucial for tumor transformation and survival of malignant cell. Ligand binding activates the receptor kinase, leading to receptor autophosphorylation, and tyrosines phosphorylation of multiple substrates, that function as signaling adapter proteins including, the insulin-receptor substrates (IRS1/2), Shc and 14-3-3 proteins. Phosphorylation of IRSs proteins lead to the activation of two main signaling pathways: the PI3K-AKT/PKB pathway and the Ras-MAPK pathway. The result of activating the MAPK pathway is increased cellular proliferation, whereas activating the PI3K pathway inhibits apoptosis and stimulates protein synthesis. Phosphorylated IRS1 can activate the 85 kDa regulatory subunit of PI3K (PIK3R1), leading to activation of several downstream substrates, including protein AKT/PKB. AKT phosphorylation, in turn, enhances protein synthesis through mTOR activation and triggers the antiapoptotic effects of IGFIR through phosphorylation and inactivation of BAD. In parallel to PI3K-driven signaling, recruitment of Grb2/SOS by phosphorylated IRS1 or Shc leads to recruitment of Ras and activation of the ras-MAPK pathway. In addition to these two main signaling pathways IGF1R signals also through the Janus kinase/signal transducer and activator of transcription pathway (JAK/STAT). Phosphorylation of JAK proteins can lead to phosphorylation/activation of signal transducers and activators of transcription (STAT) proteins. In particular activation of STAT3, may be essential for the transforming activity of IGF1R. The JAK/STAT pathway activates gene transcription and may be responsible for the transforming activity. JNK kinases can also be activated by the IGF1R. IGF1 exerts inhibiting activities on JNK activation via phosphorylation and inhibition of MAP3K5/ASK1, which is able to directly associate with the IGF1R. When present in a hybrid receptor with INSR, binds IGF1. PubMed:12138094 shows that hybrid receptors composed of IGF1R and INSR isoform Long are activated with a high affinity by IGF1, with low affinity by IGF2 and not significantly activated by insulin, and that hybrid receptors composed of IGF1R and INSR isoform Short are activated by IGF1, IGF2 and insulin. In contrast, PubMed:16831875 shows that hybrid receptors composed of IGF1R and INSR isoform Long and hybrid receptors composed of IGF1R and INSR isoform Short have similar binding characteristics, both bind IGF1 and have a low affinity for insulin. This is Insulin-like growth factor 1 receptor (IGF1R) from Homo sapiens (Human).